The following is a 335-amino-acid chain: Histidinol-phosphate aminotransferase (335 aa).

The residue at position 202 (Lys-202) is an N6-(pyridoxal phosphate)lysine.

This sequence belongs to the class-II pyridoxal-phosphate-dependent aminotransferase family. Histidinol-phosphate aminotransferase subfamily. As to quaternary structure, homodimer. Pyridoxal 5'-phosphate is required as a cofactor.

The enzyme catalyses L-histidinol phosphate + 2-oxoglutarate = 3-(imidazol-4-yl)-2-oxopropyl phosphate + L-glutamate. The protein operates within amino-acid biosynthesis; L-histidine biosynthesis; L-histidine from 5-phospho-alpha-D-ribose 1-diphosphate: step 7/9. This Thermotoga sp. (strain RQ2) protein is Histidinol-phosphate aminotransferase.